The primary structure comprises 324 residues: Olfactory receptor 51D1 (324 aa).

Residues 1 to 38 lie on the Extracellular side of the membrane; sequence MQKPQLLVPIIATSNGNLVHAAYFLLVGIPGLGPTIHF. Residues 39–59 form a helical membrane-spanning segment; that stretch reads WLAFPLCFMYALATLGNLTIV. The Cytoplasmic segment spans residues 60–67; that stretch reads LIIRVERR. A helical transmembrane segment spans residues 68–88; that stretch reads LHEPMYLFLAMLSTIDLVLSS. Residues 89-112 lie on the Extracellular side of the membrane; that stretch reads ITMPKMASLFLMGIQEIEFNICLA. An intrachain disulfide couples cysteine 110 to cysteine 202. The chain crosses the membrane as a helical span at residues 113-133; the sequence is QMFLIHALSAVESAVLLAMAF. Topologically, residues 134–152 are cytoplasmic; the sequence is DRFVAICHPLRHASVLTGC. A helical transmembrane segment spans residues 153 to 173; sequence TVAKIGLSALTRGFVFFFPLP. At 174–209 the chain is on the extracellular side; it reads FILKWLSYCQTHTVTHSFCLHQDIMKLSCTDTRVNV. The chain crosses the membrane as a helical span at residues 210-230; the sequence is VYGLFIILSVMGVDSLFIGFS. Residues 231–250 are Cytoplasmic-facing; sequence YILILWAVLELSSRRAALKA. Residues 251 to 271 traverse the membrane as a helical segment; the sequence is FNTCISHLCAVLVFYVPLIGL. Residues 272-285 are Extracellular-facing; sequence SVVHRLGGPTSLLH. A helical transmembrane segment spans residues 286–306; sequence VVMANTYLLLPPVVNPLVYGA. At 307 to 324 the chain is on the cytoplasmic side; the sequence is KTKEICSRVLCMFSQGGK.

The protein belongs to the G-protein coupled receptor 1 family.

It localises to the cell membrane. Its function is as follows. Odorant receptor. In Homo sapiens (Human), this protein is Olfactory receptor 51D1 (OR51D1).